We begin with the raw amino-acid sequence, 353 residues long: Alternative oxidase, mitochondrial (353 aa).

Positions 25 to 45 (FRSTDDEDENNPSTELATDTT) are disordered. The span at 35-45 (NPSTELATDTT) shows a compositional bias: polar residues. A helical membrane pass occupies residues 153–173 (FLFLESIAGVPGMVAGMIRHL). Fe cation-binding residues include Glu-157, Glu-196, and His-199. Residues 217–237 (LLIGQIIFYNLFFISYLISPA) form a helical membrane-spanning segment. Residues Glu-247, Glu-301, and His-304 each coordinate Fe cation.

It belongs to the alternative oxidase family. Fe cation is required as a cofactor.

It is found in the mitochondrion inner membrane. Catalyzes cyanide-resistant oxygen consumption. May increase respiration when the cytochrome respiratory pathway is restricted, or in response to low temperatures. This Yarrowia lipolytica (strain CLIB 122 / E 150) (Yeast) protein is Alternative oxidase, mitochondrial (AOX).